A 135-amino-acid polypeptide reads, in one-letter code: Cytochrome c-type biogenesis protein CcmE (135 aa).

Topologically, residues methionine 1 to arginine 8 are cytoplasmic. Residues phenylalanine 9–asparagine 29 form a helical; Signal-anchor for type II membrane protein membrane-spanning segment. The Periplasmic portion of the chain corresponds to leucine 30–glutamate 135. Residues histidine 118 and tyrosine 122 each coordinate heme.

The protein belongs to the CcmE/CycJ family.

It localises to the cell inner membrane. Its function is as follows. Heme chaperone required for the biogenesis of c-type cytochromes. Transiently binds heme delivered by CcmC and transfers the heme to apo-cytochromes in a process facilitated by CcmF and CcmH. This is Cytochrome c-type biogenesis protein CcmE from Neorickettsia sennetsu (strain ATCC VR-367 / Miyayama) (Ehrlichia sennetsu).